A 574-amino-acid polypeptide reads, in one-letter code: Amino-acid acetyltransferase, mitochondrial (574 aa).

A mitochondrion-targeting transit peptide spans 1-13 (MWRRIFAHELKYD). The 169-residue stretch at 392–560 (KGAKPSSNSP…KRLREFMRSV (169 aa)) folds into the N-acetyltransferase domain.

Belongs to the acetyltransferase family. As to quaternary structure, interacts with the acetylglutamate kinase chain of AGR5,6.

The protein resides in the mitochondrion. It carries out the reaction L-glutamate + acetyl-CoA = N-acetyl-L-glutamate + CoA + H(+). Its pathway is amino-acid biosynthesis; L-arginine biosynthesis; N(2)-acetyl-L-ornithine from L-glutamate: step 1/4. With respect to regulation, feedback inhibition by L-arginine. Its function is as follows. N-acetylglutamate synthase involved in arginine biosynthesis. In Saccharomyces cerevisiae (strain RM11-1a) (Baker's yeast), this protein is Amino-acid acetyltransferase, mitochondrial (ARG2).